The primary structure comprises 1461 residues: A disintegrin and metalloproteinase with thrombospondin motifs adt-1 (1461 aa).

The signal sequence occupies residues 1–21 (MPPFYIVITFLLSTVFRISQS). The propeptide occupies 22–163 (VHHHLNEEEL…HLQKERHLVY (142 aa)). An N-linked (GlcNAc...) asparagine glycan is attached at N69. The short motif at 190-197 (SFCDTSEQ) is the Cysteine switch element. N212 carries an N-linked (GlcNAc...) asparagine glycan. The Peptidase M12B domain maps to 233–435 (ITLEIGLFLD…CSVREFNAFL (203 aa)). H388 lines the Zn(2+) pocket. E389 is a catalytic residue. Residues H392 and H398 each contribute to the Zn(2+) site. C405 and C410 are disulfide-bonded. Residues 464 to 546 (RLPGQRFTAD…TFGLTPVPID (83 aa)) enclose the Disintegrin domain. 13 consecutive TSP type-1 domains span residues 708–759 (HQWE…RDCE), 761–802 (FGEW…RPCD), 804–852 (EGCW…QKCI), 853–898 (SQSW…QQCP), 903–952 (LSVW…GPCE), 955–1000 (YLTW…IACL), 1035–1083 (SIHS…NSCL), 1087–1133 (IWSD…PSCS), 1148–1200 (APRW…GSCS), 1203–1260 (AGGW…NVCS), 1265–1321 (DGGW…ARCH), 1324–1378 (DGGW…PACD), and 1382–1435 (DGEW…RQSP). Disulfide bonds link C719–C751, C723–C758, and C735–C741. 6 cysteine pairs are disulfide-bonded: C816/C846, C820/C851, C831/C836, C862/C892, C866/C897, and C877/C882. Cystine bridges form between C1047-C1077, C1051-C1082, and C1062-C1067. Cystine bridges form between C1160–C1194, C1162–C1199, C1173–C1184, C1215–C1253, C1219–C1259, C1231–C1243, C1277–C1314, C1281–C1320, C1292–C1304, C1336–C1372, C1340–C1377, and C1351–C1362.

Requires Zn(2+) as cofactor. In terms of tissue distribution, in hermaphrodites, expressed in the vulva, head ganglia, ventral nerve cord and amphid neurons. Expressed in the rays of the male tail.

The protein localises to the secreted. Plays a role in ray morphogenesis in the male tail, probably by remodeling the extracellular matrix (ECM) in the cuticle. This chain is A disintegrin and metalloproteinase with thrombospondin motifs adt-1, found in Caenorhabditis elegans.